Here is a 649-residue protein sequence, read N- to C-terminus: 1-deoxy-D-xylulose-5-phosphate synthase (649 aa).

Thiamine diphosphate-binding positions include H74 and 115–117 (GHA). D146 contacts Mg(2+). Thiamine diphosphate is bound by residues 147–148 (GA), N176, Y292, and E375. N176 provides a ligand contact to Mg(2+).

The protein belongs to the transketolase family. DXPS subfamily. In terms of assembly, homodimer. Mg(2+) is required as a cofactor. Thiamine diphosphate serves as cofactor.

It carries out the reaction D-glyceraldehyde 3-phosphate + pyruvate + H(+) = 1-deoxy-D-xylulose 5-phosphate + CO2. Its pathway is metabolic intermediate biosynthesis; 1-deoxy-D-xylulose 5-phosphate biosynthesis; 1-deoxy-D-xylulose 5-phosphate from D-glyceraldehyde 3-phosphate and pyruvate: step 1/1. Catalyzes the acyloin condensation reaction between C atoms 2 and 3 of pyruvate and glyceraldehyde 3-phosphate to yield 1-deoxy-D-xylulose-5-phosphate (DXP). The polypeptide is 1-deoxy-D-xylulose-5-phosphate synthase (Synechococcus sp. (strain JA-3-3Ab) (Cyanobacteria bacterium Yellowstone A-Prime)).